A 95-amino-acid chain; its full sequence is MARSRKKGPYVDPKLLKKIRMLNESGEKKIVKTWSRASTIVPEMVGHTIAVHNGLKHIPVYITENMVGHRLGEFAPTRRFGGHADKKAATKGQVR.

The interval 76-95 is disordered; the sequence is PTRRFGGHADKKAATKGQVR.

The protein belongs to the universal ribosomal protein uS19 family.

Its function is as follows. Protein S19 forms a complex with S13 that binds strongly to the 16S ribosomal RNA. In Pseudothermotoga lettingae (strain ATCC BAA-301 / DSM 14385 / NBRC 107922 / TMO) (Thermotoga lettingae), this protein is Small ribosomal subunit protein uS19.